The following is a 113-amino-acid chain: U11-theraphotoxin-Hhn1s (113 aa).

The N-terminal stretch at 1–21 (MNTVRVTFLLVFVLAVSLGQA) is a signal peptide. Positions 22–74 (DKDENRMEMQEKTEQGKSYLDFAENLLLQKLEELEAKLLEEDSEESRNSRQKR) are excised as a propeptide. A disordered region spans residues 61 to 83 (EEDSEESRNSRQKRCIGEGVPCD). 3 disulfide bridges follow: Cys-75/Cys-90, Cys-82/Cys-95, and Cys-89/Cys-110.

It belongs to the neurotoxin 14 (magi-1) family. 01 (HNTX-16) subfamily. In terms of tissue distribution, expressed by the venom gland.

Its subcellular location is the secreted. Its function is as follows. Probable ion channel inhibitor. The polypeptide is U11-theraphotoxin-Hhn1s (Cyriopagopus hainanus (Chinese bird spider)).